The following is a 340-amino-acid chain: Heat-inducible transcription repressor HrcA (340 aa).

Belongs to the HrcA family.

Its function is as follows. Negative regulator of class I heat shock genes (grpE-dnaK-dnaJ and groELS operons). Prevents heat-shock induction of these operons. The polypeptide is Heat-inducible transcription repressor HrcA (Mycoplasma capricolum subsp. capricolum (strain California kid / ATCC 27343 / NCTC 10154)).